A 207-amino-acid chain; its full sequence is LexA repressor (207 aa).

The H-T-H motif DNA-binding region spans 28–48; it reads RAEIAQKLGFKSANAAEEHLK. Residues Ser124 and Lys161 each act as for autocatalytic cleavage activity in the active site.

This sequence belongs to the peptidase S24 family. Homodimer.

It carries out the reaction Hydrolysis of Ala-|-Gly bond in repressor LexA.. Functionally, represses a number of genes involved in the response to DNA damage (SOS response), including recA and lexA. In the presence of single-stranded DNA, RecA interacts with LexA causing an autocatalytic cleavage which disrupts the DNA-binding part of LexA, leading to derepression of the SOS regulon and eventually DNA repair. This Aeromonas salmonicida (strain A449) protein is LexA repressor.